The chain runs to 428 residues: Serine hydroxymethyltransferase (428 aa).

Residues L117 and 121–123 contribute to the (6S)-5,6,7,8-tetrahydrofolate site; that span reads GHL. K226 is modified (N6-(pyridoxal phosphate)lysine).

This sequence belongs to the SHMT family. As to quaternary structure, homodimer. It depends on pyridoxal 5'-phosphate as a cofactor.

It localises to the cytoplasm. The enzyme catalyses (6R)-5,10-methylene-5,6,7,8-tetrahydrofolate + glycine + H2O = (6S)-5,6,7,8-tetrahydrofolate + L-serine. Its pathway is one-carbon metabolism; tetrahydrofolate interconversion. It participates in amino-acid biosynthesis; glycine biosynthesis; glycine from L-serine: step 1/1. In terms of biological role, catalyzes the reversible interconversion of serine and glycine with tetrahydrofolate (THF) serving as the one-carbon carrier. This reaction serves as the major source of one-carbon groups required for the biosynthesis of purines, thymidylate, methionine, and other important biomolecules. Also exhibits THF-independent aldolase activity toward beta-hydroxyamino acids, producing glycine and aldehydes, via a retro-aldol mechanism. This chain is Serine hydroxymethyltransferase, found in Aquifex aeolicus (strain VF5).